A 250-amino-acid chain; its full sequence is GPI-anchored hemophore PGA10 (250 aa).

A signal peptide spans 1–20 (MMSFSLLSIVSIALAATVSA). The region spanning 26-137 (NAYTAYPSVA…DALAKAANAA (112 aa)) is the CFEM domain. Cystine bridges form between cysteine 54/cysteine 94, cysteine 58/cysteine 89, cysteine 68/cysteine 75, and cysteine 77/cysteine 110. Aspartate 72 is a heme binding site. The disordered stretch occupies residues 165–219 (STSHESKVAETSVAQQTASTEKSSAAETSRAKETSKAEESSKAEETSVAQSSSSA). A compositionally biased stretch (low complexity) spans 178 to 192 (AQQTASTEKSSAAET). The span at 193–209 (SRAKETSKAEESSKAEE) shows a compositional bias: basic and acidic residues. A compositionally biased stretch (low complexity) spans 210–219 (TSVAQSSSSA). Asparagine 230 is lipidated: GPI-anchor amidated asparagine. Residues 231–250 (AGNMPVIAIGGVIAAFAALI) constitute a propeptide, removed in mature form.

Belongs to the RBT5 family. Post-translationally, the GPI-anchor is attached to the protein in the endoplasmic reticulum and serves to target the protein to the cell surface. There, the glucosamine-inositol phospholipid moiety is cleaved off and the GPI-modified mannoprotein is covalently attached via its lipidless GPI glycan remnant to the 1,6-beta-glucan of the outer cell wall layer. Mannosylated.

Its subcellular location is the secreted. The protein localises to the cell wall. The protein resides in the cell membrane. In terms of biological role, heme-binding protein involved in heme-iron utilization. The ability to acquire iron from host tissues is a major virulence factor of pathogenic microorganisms. Involved in biofilm formation. This is GPI-anchored hemophore PGA10 from Candida albicans (strain SC5314 / ATCC MYA-2876) (Yeast).